The primary structure comprises 782 residues: MKISSGAINFSTIPNQVKKLITSIREHTKNGLASKITSVKNTHASLNEKLKTGKSSSIEFALPQKIKDFFQPKDKNTLNKTLITVKNIKDTNNAGKKNISAEDVSKMNAAFMRKHIANQTCDYNYRMTGAAPLPGGVSVSANNRPTVSEGRTPPVSPSLSLQATSSPSSPADWAKKLTDAVLRQKAGETLTAADRDFSNADFRNITFSKILPPSFMERDGDIIKGFNFSNSKFTYSDISHLHFDECRFTYSTLSDVVCSNTKFSNSDMNEVFLQYSITTQQQPSFIDTTLKNTLIRHKANLSGVILNEPDNSSPPSVSGGGNFIRLGDIWLQMPLLWTENAVDGFLNHEHNNGKSILMTIDSLPDKYSQEKVQAMEDLVKSLRGGRLTEACIRPVESSLVSVLAHPPYTQSALIREWLGPVQERFFAHQCQTYNDVPLPTPDTYYQQRILPVLLDSFDRNSAAMTTHSGLFNQVILHCMTGVDCTDGTRQKAAALYEQYLAHPAVSPHIHNGLFGNYDGSPDWTTRAADNFLLLSSQDSDTAMMLSTDTLLTMLNPTPDTAWDNFYLLRAGENVSTAQISPVELFRHDFPVFLAAFNQQATQRRFGELIDIILSTEEHGELNQQFIAATNQKHSTVKLIDDASVSRLATIFAPLLPEGKLSPAHYQHILSAYHLTDATPQKQAETLFCLSTAFARYSSSAIFGTEHDSPPALRGYAEALMQKAWELSPAIFPSSEQFTDWSDRFHGLHGAFTCTSVVADSMQRHARKYFPSVLSSILPLAWA.

The interval 137-171 (VSVSANNRPTVSEGRTPPVSPSLSLQATSSPSSPA) is disordered. Residues 157-171 (PSLSLQATSSPSSPA) show a composition bias toward low complexity. The Glycyl thioester intermediate role is filled by Cys-753.

It belongs to the SopA E3 ligase family. Ubiquitinated in the presence of host E1 ubiquitin-activating enzyme, E2 ubiquitin-conjugating enzyme and ubiquitin.

The protein localises to the secreted. Its subcellular location is the host cell. The catalysed reaction is S-ubiquitinyl-[E2 ubiquitin-conjugating enzyme]-L-cysteine + [acceptor protein]-L-lysine = [E2 ubiquitin-conjugating enzyme]-L-cysteine + N(6)-ubiquitinyl-[acceptor protein]-L-lysine.. Functionally, effector proteins function to alter host cell physiology and promote bacterial survival in host tissues. This protein is an E3 ubiquitin ligase that interferes with host's ubiquitination pathway. In Salmonella enteritidis PT4 (strain P125109), this protein is E3 ubiquitin-protein ligase SopA (sopA).